The following is a 716-amino-acid chain: Leucine-rich repeat neuronal protein 1 (716 aa).

A signal peptide spans 1–25 (MARLSTGKAACQVVLGLLITSLTES). An LRRNT domain is found at 26 to 72 (SILTSECPQLCVCEIRPWFTPQSTYREATTVDCNDLRLTRIPGNLSS). At 26 to 631 (SILTSECPQL…DISDHETSTA (606 aa)) the chain is on the extracellular side. Residue N69 is glycosylated (N-linked (GlcNAc...) asparagine). LRR repeat units follow at residues 73–95 (DTQVLLLQSNNIAKTVDELQQLF), 96–117 (NLTELDFSQNNFTNIKEVGLAN), 120–141 (QLTTLHLEENQISEMTDYCLQD), 144–165 (NLQELYINHNQISTISANAFSG), 168–189 (NLLRLHLNSNKLKVIDSRWFDS), 192–213 (NLEILMIGENPVIGILDMNFRP), 216–237 (NLRSLVLAGMYLTDVPGNALVG), 240–261 (SLESLSFYDNKLIKVPQLALQK), and 264–285 (NLKFLDLNKNPIHKIQEGDFKN). Residues N96 and N117 are each glycosylated (N-linked (GlcNAc...) asparagine). An LRRCT domain is found at 371–424 (NPLRCDCVIHWINSNKTNIRFMEPLSMFCAMPPEYRGQQVKEVLIQDSSEQCLP). N-linked (GlcNAc...) asparagine glycosylation is present at N385. An Ig-like C2-type domain is found at 424–515 (PMISHDTFPN…GADTRVATIK (92 aa)). A disulfide bridge links C447 with C499. An N-linked (GlcNAc...) asparagine glycan is attached at N517. The Fibronectin type-III domain occupies 525–619 (QVLKIYVKQT…VNVTTKTAAF (95 aa)). Residues 632 to 652 (LAAVMGSMFAVISLASIAIYI) traverse the membrane as a helical segment. Over 653-716 (AKRFKRKNYH…VDTSRSYYMW (64 aa)) the chain is Cytoplasmic. The tract at residues 692–716 (SDKDKDGSADTKPTQVDTSRSYYMW) is disordered. Over residues 702-716 (TKPTQVDTSRSYYMW) the composition is skewed to polar residues.

As to expression, expressed in brain.

Its subcellular location is the membrane. The sequence is that of Leucine-rich repeat neuronal protein 1 (Lrrn1) from Mus musculus (Mouse).